Here is a 594-residue protein sequence, read N- to C-terminus: Isocitrate dehydrogenase kinase/phosphatase (594 aa).

ATP contacts are provided by residues alanine 315–methionine 321 and lysine 336. Residue aspartate 371 is part of the active site.

It belongs to the AceK family.

The protein localises to the cytoplasm. The catalysed reaction is L-seryl-[isocitrate dehydrogenase] + ATP = O-phospho-L-seryl-[isocitrate dehydrogenase] + ADP + H(+). In terms of biological role, bifunctional enzyme which can phosphorylate or dephosphorylate isocitrate dehydrogenase (IDH) on a specific serine residue. This is a regulatory mechanism which enables bacteria to bypass the Krebs cycle via the glyoxylate shunt in response to the source of carbon. When bacteria are grown on glucose, IDH is fully active and unphosphorylated, but when grown on acetate or ethanol, the activity of IDH declines drastically concomitant with its phosphorylation. This is Isocitrate dehydrogenase kinase/phosphatase from Klebsiella pneumoniae (strain 342).